Reading from the N-terminus, the 556-residue chain is Phenylalanine--tRNA ligase beta subunit (556 aa).

Residues 278-353 (LTPKEFEVEL…IAYGYNNIEP (76 aa)) form the B5 domain. Residues Asp331, Asp337, Glu340, and Asp341 each coordinate Mg(2+).

The protein belongs to the phenylalanyl-tRNA synthetase beta subunit family. Type 2 subfamily. As to quaternary structure, tetramer of two alpha and two beta subunits. The cofactor is Mg(2+).

It localises to the cytoplasm. It carries out the reaction tRNA(Phe) + L-phenylalanine + ATP = L-phenylalanyl-tRNA(Phe) + AMP + diphosphate + H(+). The protein is Phenylalanine--tRNA ligase beta subunit of Pyrococcus horikoshii (strain ATCC 700860 / DSM 12428 / JCM 9974 / NBRC 100139 / OT-3).